Here is a 98-residue protein sequence, read N- to C-terminus: Cell cycle protein GpsB (98 aa).

The stretch at 34–72 forms a coiled coil; it reads LDMVIKDYEAFHQEIEELQQENLQLKKQLEEANKRQPAQ.

The protein belongs to the GpsB family. In terms of assembly, forms polymers through the coiled coil domains. Interacts with PBP1, MreC and EzrA.

It localises to the cytoplasm. Its function is as follows. Divisome component that associates with the complex late in its assembly, after the Z-ring is formed, and is dependent on DivIC and PBP2B for its recruitment to the divisome. Together with EzrA, is a key component of the system that regulates PBP1 localization during cell cycle progression. Its main role could be the removal of PBP1 from the cell pole after pole maturation is completed. Also contributes to the recruitment of PBP1 to the division complex. Not essential for septum formation. The protein is Cell cycle protein GpsB of Bacillus licheniformis (strain ATCC 14580 / DSM 13 / JCM 2505 / CCUG 7422 / NBRC 12200 / NCIMB 9375 / NCTC 10341 / NRRL NRS-1264 / Gibson 46).